Consider the following 458-residue polypeptide: Photosystem II CP43 reaction center protein (458 aa).

Transmembrane regions (helical) follow at residues L54–A78, L119–N140, K163–T185, R240–S260, and W276–A297. Residue E352 participates in [CaMn4O5] cluster binding. Residues R432–D456 traverse the membrane as a helical segment.

It belongs to the PsbB/PsbC family. PsbC subfamily. In terms of assembly, PSII is composed of 1 copy each of membrane proteins PsbA, PsbB, PsbC, PsbD, PsbE, PsbF, PsbH, PsbI, PsbJ, PsbK, PsbL, PsbM, PsbT, PsbX, PsbY, PsbZ, Psb30/Ycf12, peripheral proteins PsbO, CyanoQ (PsbQ), PsbU, PsbV and a large number of cofactors. It forms dimeric complexes. The cofactor is Binds multiple chlorophylls and provides some of the ligands for the Ca-4Mn-5O cluster of the oxygen-evolving complex. It may also provide a ligand for a Cl- that is required for oxygen evolution. PSII binds additional chlorophylls, carotenoids and specific lipids..

The protein localises to the cellular thylakoid membrane. In terms of biological role, one of the components of the core complex of photosystem II (PSII). It binds chlorophyll and helps catalyze the primary light-induced photochemical processes of PSII. PSII is a light-driven water:plastoquinone oxidoreductase, using light energy to abstract electrons from H(2)O, generating O(2) and a proton gradient subsequently used for ATP formation. This chain is Photosystem II CP43 reaction center protein, found in Prochlorothrix hollandica.